The following is a 277-amino-acid chain: Large ribosomal subunit protein uL2 (277 aa).

Residues 219–277 form a disordered region; that stretch reads TVRGSVMNPNDHPHGGGEGKAPVGRKAPSTPWGKPALGLKTRNKKAKSDKLIVRRRNEK. A compositionally biased stretch (basic and acidic residues) spans 264–277; sequence AKSDKLIVRRRNEK.

The protein belongs to the universal ribosomal protein uL2 family. Part of the 50S ribosomal subunit. Forms a bridge to the 30S subunit in the 70S ribosome.

One of the primary rRNA binding proteins. Required for association of the 30S and 50S subunits to form the 70S ribosome, for tRNA binding and peptide bond formation. It has been suggested to have peptidyltransferase activity; this is somewhat controversial. Makes several contacts with the 16S rRNA in the 70S ribosome. The polypeptide is Large ribosomal subunit protein uL2 (Streptococcus sanguinis (strain SK36)).